A 174-amino-acid chain; its full sequence is MKPSNIRIRAAKPIDFPKVAAMHYPVWRQSWTGILDPYLLDMIGSPKLWVEESYPQSLKRGGWSMWIAESGGQPIGMTMFGPDIAHPDRIQIDALYVAENSQRHGIGGRLLNRALHSHPSADMILWCAEKNSKARGFYEKKDFHIDGRTFTWKPLSGVNVPHVGYRLYRSAPPG.

Residues 6 to 172 (IRIRAAKPID…VGYRLYRSAP (167 aa)) enclose the N-acetyltransferase domain.

This sequence belongs to the acetyltransferase family.

This Mycobacterium tuberculosis (strain ATCC 25618 / H37Rv) protein is Probable N-acetyltransferase Rv2775.